Reading from the N-terminus, the 114-residue chain is uncharacterized protein (114 aa).

The HIT domain occupies 6 to 114 (IFSKIIRREI…GGRPFSWPPG (109 aa)). A Histidine triad motif motif is present at residues 98–102 (HLHLH).

This is an uncharacterized protein from Synechocystis sp. (strain ATCC 27184 / PCC 6803 / Kazusa).